Reading from the N-terminus, the 352-residue chain is Selenide, water dikinase (352 aa).

The active site involves Cys23. Residues Lys26 and 54 to 56 (SRD) contribute to the ATP site. A Mg(2+)-binding site is contributed by Asp57. ATP is bound by residues Asp74, Asp97, and 145-147 (GHS). Mg(2+) is bound at residue Asp97. Asp233 provides a ligand contact to Mg(2+).

The protein belongs to the selenophosphate synthase 1 family. Class I subfamily. As to quaternary structure, homodimer. Requires Mg(2+) as cofactor.

It catalyses the reaction hydrogenselenide + ATP + H2O = selenophosphate + AMP + phosphate + 2 H(+). Synthesizes selenophosphate from selenide and ATP. In Shewanella sp. (strain MR-4), this protein is Selenide, water dikinase.